The following is a 201-amino-acid chain: 3-isopropylmalate dehydratase small subunit (201 aa).

Belongs to the LeuD family. LeuD type 1 subfamily. Heterodimer of LeuC and LeuD.

The enzyme catalyses (2R,3S)-3-isopropylmalate = (2S)-2-isopropylmalate. The protein operates within amino-acid biosynthesis; L-leucine biosynthesis; L-leucine from 3-methyl-2-oxobutanoate: step 2/4. Functionally, catalyzes the isomerization between 2-isopropylmalate and 3-isopropylmalate, via the formation of 2-isopropylmaleate. The sequence is that of 3-isopropylmalate dehydratase small subunit from Thermus thermophilus (strain ATCC BAA-163 / DSM 7039 / HB27).